A 781-amino-acid polypeptide reads, in one-letter code: MTKAKKSRAYQEGDIRYKCDFQGCTKSFTRKEHARRHFRSHTNSKAFICPHCSSSFTRSDVLNRHVNQKHVKQNDAGSQTHPKHDKTLISSSDQELPFPSYVEADVQDAAYTDLKSHIDQPILPDQPIISDNFNEGLQSAIAQTGNNYMFTTSRRNNSISGSITIPESDQQINLQNKFLSTPSIKNNANKSLSPQDSISIFGTSPFNAYQQNTDNFVCWLFDNMEKDAPTESVSNFTDGINAKQLNLMPVLDSPTIDFLSSHFRVDDKLVAKDLLSLSAYSSLIQVMNNNYQLSEEALQYITRSRVNLWIAHYWKDFHPRWPFLHRGTLKVDEAPVELLLAMITMGMHFVGDAFAYSIAVSIHSTLRFSIYTHPDFKPPASLWVYQALLIAEIFEKMTSTVEQHNLSQIFHGVTIESMQNGLSSKDTVTEKIPKNMTGTNIAQHKWHQWVDREASKRIAFFSFVLDSQHVILFGYRPLIDITSVGLPLLCDEALWNADSYEAWTSLLNENDPPHFFPVLKMFLTNEHLPPKLSPWNMMIVLHGLTTIGWILSRENLGIVENIMQNNGTNLKNWRILLKASYKFWLRTYRVFFLNNGTLPLNHPYVRGCLATYELAHISLHTNIVALQTYAKSIVSTSRRLYASTSRYVSAWLASDDSEVSIKHAVDMVEAFLGGDMEYDVQNETGLHRPWCLYVSTLILWAYGYVSDGRCEMLEPGNNDCKSQLNAYLMQMRTGLSEKAKDHVYVRSKTLPLLKCVIDVLCPARWGLLVDGVRILSKLVQL.

2 consecutive C2H2-type zinc fingers follow at residues 17-41 and 47-70; these read YKCDFQGCTKSFTRKEHARRHFRSH and FICPHCSSSFTRSDVLNRHVNQKH.

The protein localises to the nucleus. It localises to the cytoplasm. It is found in the cytoskeleton. Its subcellular location is the spindle. Functionally, required for maintaining cell viability in nitrogen-deficient stationary phase (G0) cells. The chain is Zinc finger protein klf1 (klf1) from Schizosaccharomyces pombe (strain 972 / ATCC 24843) (Fission yeast).